A 279-amino-acid chain; its full sequence is Ribosomal RNA small subunit methyltransferase J (279 aa).

Residues 138–139 (ER) and aspartate 194 contribute to the S-adenosyl-L-methionine site.

Belongs to the methyltransferase superfamily. RsmJ family.

Its subcellular location is the cytoplasm. The catalysed reaction is guanosine(1516) in 16S rRNA + S-adenosyl-L-methionine = N(2)-methylguanosine(1516) in 16S rRNA + S-adenosyl-L-homocysteine + H(+). In terms of biological role, specifically methylates the guanosine in position 1516 of 16S rRNA. In Acinetobacter baumannii (strain ATCC 17978 / DSM 105126 / CIP 53.77 / LMG 1025 / NCDC KC755 / 5377), this protein is Ribosomal RNA small subunit methyltransferase J.